The sequence spans 323 residues: Prenyl transferase (323 aa).

K46, R49, and H81 together coordinate isopentenyl diphosphate. Mg(2+) is bound by residues D88 and D92. R97 is an an all-trans-polyprenyl diphosphate binding site. R98 provides a ligand contact to isopentenyl diphosphate. Residues K174, T175, and Q212 each contribute to the an all-trans-polyprenyl diphosphate site.

It belongs to the FPP/GGPP synthase family. Mg(2+) serves as cofactor.

The protein resides in the plastid. Its subcellular location is the chloroplast. Functionally, possible role in synthesis of the nonaprenyl side chain of plastoquinone or in synthesis of other prenyl chains such as undekaprenyl pyrophosphate. This chain is Prenyl transferase (preA), found in Porphyra purpurea (Red seaweed).